A 410-amino-acid chain; its full sequence is Porin-like protein GalP (410 aa).

The first 25 residues, 1–25 (MKCRTLYPLVPTFALAASLPLQALA), serve as a signal peptide directing secretion.

This sequence belongs to the outer membrane porin (Opr) (TC 1.B.25) family.

Probable transporter, possibly involved in the gallate degradation pathway. May play a role in the uptake of low gallate concentrations that may exist in the natural habitats of P.putida. In Pseudomonas putida (strain ATCC 47054 / DSM 6125 / CFBP 8728 / NCIMB 11950 / KT2440), this protein is Porin-like protein GalP (galP).